Consider the following 103-residue polypeptide: Phospholipase A2 large subunit (103 aa).

Ca(2+) is bound by residues Trp7, Gly9, and Gly11. 4 disulfides stabilise this stretch: Cys8–Cys30, Cys29–Cys68, Cys36–Cys61, and Cys59–Cys96. Asn16 carries an N-linked (GlcNAc...) asparagine glycan. The active site involves His33. Asp34 is a binding site for Ca(2+).

This sequence belongs to the phospholipase A2 family. Group III subfamily. In terms of assembly, heterodimer composed of a large subunit and a small subunit; disulfide-linked. It depends on Ca(2+) as a cofactor. In terms of tissue distribution, expressed by the venom gland.

Its subcellular location is the secreted. The enzyme catalyses a 1,2-diacyl-sn-glycero-3-phosphocholine + H2O = a 1-acyl-sn-glycero-3-phosphocholine + a fatty acid + H(+). In terms of biological role, phospholipase toxin, which catalyzes the calcium-dependent hydrolysis of the 2-acyl groups in 3-sn-phosphoglycerides. Inhibits both skeletal (RYR1) and cardiac (RYR2) ryanodine receptors (calcium release channels). Probably blocks ryanodine receptors by generating a lipid product. The protein is Phospholipase A2 large subunit of Chersonesometrus fulvipes (Indian black scorpion).